The following is a 137-amino-acid chain: Acidic phospholipase A2 1 (137 aa).

An N-terminal signal peptide occupies residues 1 to 11; it reads LVAVCVSLLGA. A propeptide spanning residues 12-19 is cleaved from the precursor; sequence ANIPPQPL. Cystine bridges form between Cys30/Cys89, Cys44/Cys136, Cys46/Cys62, Cys61/Cys117, Cys68/Cys110, Cys78/Cys103, and Cys96/Cys108. Positions 45, 47, and 49 each coordinate Ca(2+). Tridecanoate-binding residues include Gly49 and His65. His65 is an active-site residue. Asp66 lines the Ca(2+) pocket. The active site involves Asp111.

As to quaternary structure, monomer. Requires Ca(2+) as cofactor. Expressed by the venom gland.

It localises to the secreted. It catalyses the reaction a 1,2-diacyl-sn-glycero-3-phosphocholine + H2O = a 1-acyl-sn-glycero-3-phosphocholine + a fatty acid + H(+). Functionally, snake venom phospholipase A2 (PLA2) that shows anticoagulant and neurotoxic activities. PLA2 catalyzes the calcium-dependent hydrolysis of the 2-acyl groups in 3-sn-phosphoglycerides. The polypeptide is Acidic phospholipase A2 1 (Bungarus caeruleus (Indian krait)).